Consider the following 78-residue polypeptide: Small ribosomal subunit protein bS16c (78 aa).

It belongs to the bacterial ribosomal protein bS16 family.

It localises to the plastid. Its subcellular location is the chloroplast. The chain is Small ribosomal subunit protein bS16c from Gracilaria tenuistipitata var. liui (Red alga).